A 298-amino-acid chain; its full sequence is Ethanolamine ammonia-lyase small subunit (298 aa).

3 residues coordinate adenosylcob(III)alamin: valine 210, glutamate 231, and cysteine 261.

It belongs to the EutC family. As to quaternary structure, the basic unit is a heterodimer which dimerizes to form tetramers. The heterotetramers trimerize; 6 large subunits form a core ring with 6 small subunits projecting outwards. Requires adenosylcob(III)alamin as cofactor.

The protein localises to the bacterial microcompartment. It carries out the reaction ethanolamine = acetaldehyde + NH4(+). It participates in amine and polyamine degradation; ethanolamine degradation. Catalyzes the deamination of various vicinal amino-alcohols to oxo compounds. Allows this organism to utilize ethanolamine as the sole source of nitrogen and carbon in the presence of external vitamin B12. In Salmonella agona (strain SL483), this protein is Ethanolamine ammonia-lyase small subunit.